Here is a 536-residue protein sequence, read N- to C-terminus: Putative UDP-glucuronosyltransferase ugt-47 (536 aa).

The first 21 residues, 1–21 (MMLQTSTILQLLLFLVGSVSA), serve as a signal peptide directing secretion. Asn52 and Asn308 each carry an N-linked (GlcNAc...) asparagine glycan. Residues 497 to 517 (IIVPVLFVLLYCLIIPFFKLI) traverse the membrane as a helical segment.

The protein belongs to the UDP-glycosyltransferase family.

The protein localises to the membrane. It carries out the reaction glucuronate acceptor + UDP-alpha-D-glucuronate = acceptor beta-D-glucuronoside + UDP + H(+). The protein is Putative UDP-glucuronosyltransferase ugt-47 (ugt-47) of Caenorhabditis briggsae.